Here is a 142-residue protein sequence, read N- to C-terminus: Hemoglobin subunit alpha (142 aa).

The 141-residue stretch at 2 to 142 (KLSAEDKHNV…VGHVLTSKYR (141 aa)) folds into the Globin domain. Residue H59 participates in O2 binding. H88 contacts heme b.

The protein belongs to the globin family. In terms of assembly, heterotetramer of two alpha chains and two beta chains. In terms of tissue distribution, red blood cells.

In terms of biological role, involved in oxygen transport from the lung to the various peripheral tissues. The polypeptide is Hemoglobin subunit alpha (HBA) (Taricha granulosa (Roughskin newt)).